Reading from the N-terminus, the 173-residue chain is Avenin-like a5 (173 aa).

The signal sequence occupies residues 1–19 (MKTMLILALIALAATSVVA).

The protein belongs to the prolamin family. Contains 7 disulfide bonds.

Seed storage protein. Not integrated in the gluten polymer through disulfide bonds, unless incorporated by reduction and reoxidation during dough making. Increases dough strength and bread volume, but decreases dough stability when added into a base wheat flour. This is Avenin-like a5 from Triticum aestivum (Wheat).